We begin with the raw amino-acid sequence, 268 residues long: Enoyl-[acyl-carrier-protein] reductase [NADH] (268 aa).

Residues 20–21 (SI), 64–65 (DV), and 95–96 (IA) contribute to the NAD(+) site. Tyr157 is a binding site for substrate. Residues Lys164 and Ile193 each contribute to the NAD(+) site.

Belongs to the short-chain dehydrogenases/reductases (SDR) family. FabI subfamily. Homodimer. Homotetramer.

The enzyme catalyses a 2,3-saturated acyl-[ACP] + NAD(+) = a (2E)-enoyl-[ACP] + NADH + H(+). It carries out the reaction a 2,3-saturated acyl-CoA + NAD(+) = a (2E)-enoyl-CoA + NADH + H(+). It functions in the pathway lipid metabolism; mycolic acid biosynthesis. Functionally, enoyl-ACP reductase of the type II fatty acid syntase (FAS-II) system, which is involved in the biosynthesis of mycolic acids, a major component of mycobacterial cell walls. Catalyzes the NADH-dependent reduction of the double bond of 2-trans-enoyl-[acyl-carrier protein], an essential step in the fatty acid elongation cycle of the FAS-II pathway. Shows preference for long-chain fatty acyl thioester substrates, and can also use 2-trans-enoyl-CoAs as alternative substrates. The mycobacterial FAS-II system utilizes the products of the FAS-I system as primers to extend fatty acyl chain lengths up to C56, forming the meromycolate chain that serves as the precursor for final mycolic acids. This chain is Enoyl-[acyl-carrier-protein] reductase [NADH], found in Mycobacterium avium.